We begin with the raw amino-acid sequence, 77 residues long: Putative membrane protein insertion efficiency factor (77 aa).

It belongs to the UPF0161 family.

The protein localises to the cell membrane. In terms of biological role, could be involved in insertion of integral membrane proteins into the membrane. The chain is Putative membrane protein insertion efficiency factor from Geobacillus sp. (strain WCH70).